Consider the following 189-residue polypeptide: UPF0301 protein PputW619_0469 (189 aa).

The protein belongs to the UPF0301 (AlgH) family.

This Pseudomonas putida (strain W619) protein is UPF0301 protein PputW619_0469.